An 856-amino-acid polypeptide reads, in one-letter code: Phosphatidylglycerol lysyltransferase (856 aa).

Transmembrane regions (helical) follow at residues 7–27 (ALSI…IYQS), 51–71 (LFML…YDYV), 88–108 (VSWI…AGVG), 128–148 (IAWL…FVAA), 161–181 (PWLW…LAVS), 208–228 (SVVE…AMGI), 235–255 (VFGV…PGGF), 280–300 (IVLY…FFAA), 342–362 (SLSL…SLPI), 375–395 (ALLL…ILPI), 420–440 (FLKG…VLLV), 459–479 (IFAV…AGFI), and 501–521 (HATI…TVVY).

This sequence belongs to the LPG synthase family.

The protein localises to the cell membrane. The catalysed reaction is L-lysyl-tRNA(Lys) + a 1,2-diacyl-sn-glycero-3-phospho-(1'-sn-glycerol) = a 1,2-diacyl-sn-glycero-3-phospho-1'-(3'-O-L-lysyl)-sn-glycerol + tRNA(Lys). Catalyzes the transfer of a lysyl group from L-lysyl-tRNA(Lys) to membrane-bound phosphatidylglycerol (PG), which produces lysylphosphatidylglycerol (LPG), one of the components of the bacterial membrane with a positive net charge. LPG synthesis contributes to the resistance to cationic antimicrobial peptides (CAMPs) and likely protects B.subtilis against its own CAMPs and against those produced by competiting microorganisms (bacteriocins). In fact, the modification of anionic phosphatidylglycerol with positively charged L-lysine results in repulsion of the peptides. The sequence is that of Phosphatidylglycerol lysyltransferase (mprF) from Bacillus subtilis (strain 168).